The sequence spans 305 residues: Pseudouridine-5'-phosphate glycosidase (305 aa).

Glu-22 serves as the catalytic Proton donor. Lys-84 and Val-104 together coordinate substrate. Asp-136 is a binding site for Mn(2+). Residue 138–140 (SAD) participates in substrate binding. Lys-157 serves as the catalytic Nucleophile.

The protein belongs to the pseudouridine-5'-phosphate glycosidase family. Homotrimer. Mn(2+) is required as a cofactor.

It catalyses the reaction D-ribose 5-phosphate + uracil = psi-UMP + H2O. Its function is as follows. Catalyzes the reversible cleavage of pseudouridine 5'-phosphate (PsiMP) to ribose 5-phosphate and uracil. Functions biologically in the cleavage direction, as part of a pseudouridine degradation pathway. This is Pseudouridine-5'-phosphate glycosidase from Chloroflexus aurantiacus (strain ATCC 29364 / DSM 637 / Y-400-fl).